A 1229-amino-acid chain; its full sequence is Receptor-type adenylate cyclase GRESAG 4.3 (1229 aa).

Topologically, residues 1 to 24 are cytoplasmic; the sequence is MIARVCRLTKHSKPPHLPITLTTP. The chain crosses the membrane as a helical span at residues 25-45; the sequence is TLFLVVLVLLQLHPICVLVNV. The Extracellular portion of the chain corresponds to 46-845; sequence DDGGGVTVKA…PNGNALTPAQ (800 aa). Asn-77, Asn-84, Asn-626, Asn-693, and Asn-768 each carry an N-linked (GlcNAc...) asparagine glycan. Residues 846–866 traverse the membrane as a helical segment; the sequence is LAGVVGGSLFVVALAICLSVL. Topologically, residues 867-1229 are cytoplasmic; that stretch reads ACFTLRGTRD…SNDLSDMIRV (363 aa). In terms of domain architecture, Guanylate cyclase spans 889-1043; sequence TLIFTDIESS…RTSNMAARTE (155 aa). Mg(2+) contacts are provided by Asp-894 and Asp-937.

Belongs to the adenylyl cyclase class-3 family. Mg(2+) serves as cofactor.

It is found in the membrane. It carries out the reaction ATP = 3',5'-cyclic AMP + diphosphate. In terms of biological role, could act as a receptor for an unknown ligand. This chain is Receptor-type adenylate cyclase GRESAG 4.3 (GRESAG 4.3), found in Trypanosoma brucei brucei.